The sequence spans 256 residues: Thiazole synthase (256 aa).

Catalysis depends on Lys96, which acts as the Schiff-base intermediate with DXP. 1-deoxy-D-xylulose 5-phosphate contacts are provided by residues Gly157, 183 to 184, and 205 to 206; these read AG and NT.

The protein belongs to the ThiG family. As to quaternary structure, homotetramer. Forms heterodimers with either ThiH or ThiS.

The protein localises to the cytoplasm. The enzyme catalyses [ThiS sulfur-carrier protein]-C-terminal-Gly-aminoethanethioate + 2-iminoacetate + 1-deoxy-D-xylulose 5-phosphate = [ThiS sulfur-carrier protein]-C-terminal Gly-Gly + 2-[(2R,5Z)-2-carboxy-4-methylthiazol-5(2H)-ylidene]ethyl phosphate + 2 H2O + H(+). Its pathway is cofactor biosynthesis; thiamine diphosphate biosynthesis. Catalyzes the rearrangement of 1-deoxy-D-xylulose 5-phosphate (DXP) to produce the thiazole phosphate moiety of thiamine. Sulfur is provided by the thiocarboxylate moiety of the carrier protein ThiS. In vitro, sulfur can be provided by H(2)S. The protein is Thiazole synthase of Bacillus cereus (strain 03BB102).